Here is a 287-residue protein sequence, read N- to C-terminus: 33 kDa chaperonin (287 aa).

Intrachain disulfides connect cysteine 233–cysteine 235 and cysteine 266–cysteine 269.

This sequence belongs to the HSP33 family. In terms of processing, under oxidizing conditions two disulfide bonds are formed involving the reactive cysteines. Under reducing conditions zinc is bound to the reactive cysteines and the protein is inactive.

Its subcellular location is the cytoplasm. Its function is as follows. Redox regulated molecular chaperone. Protects both thermally unfolding and oxidatively damaged proteins from irreversible aggregation. Plays an important role in the bacterial defense system toward oxidative stress. In Thermodesulfovibrio yellowstonii (strain ATCC 51303 / DSM 11347 / YP87), this protein is 33 kDa chaperonin.